The following is a 141-amino-acid chain: Large ribosomal subunit protein uL11 (141 aa).

Belongs to the universal ribosomal protein uL11 family. As to quaternary structure, part of the ribosomal stalk of the 50S ribosomal subunit. Interacts with L10 and the large rRNA to form the base of the stalk. L10 forms an elongated spine to which L12 dimers bind in a sequential fashion forming a multimeric L10(L12)X complex. Post-translationally, one or more lysine residues are methylated.

Its function is as follows. Forms part of the ribosomal stalk which helps the ribosome interact with GTP-bound translation factors. In Streptococcus mutans serotype c (strain ATCC 700610 / UA159), this protein is Large ribosomal subunit protein uL11.